Consider the following 197-residue polypeptide: Cyclin-dependent kinase inhibitor 1B (197 aa).

Residues 1–11 are compositionally biased toward polar residues; it reads MSNVRVSNGSP. The interval 1–34 is disordered; sequence MSNVRVSNGSPSLERMDARQAEHPKPSACRNLFG. S10 is modified (phosphoserine; by UHMK1). The segment covering 14 to 25 has biased composition (basic and acidic residues); sequence ERMDARQAEHPK. An interaction with CDK2 region spans residues 51-91; that stretch reads DMEEASQRKWNFDFQNHKPLEGRYEWQEVERGSLPEFYYRP. A Phosphotyrosine; by SRC modification is found at Y74. The disordered stretch occupies residues 86–197; it reads EFYYRPPRPP…PKKPGLRRQT (112 aa). Y88 carries the post-translational modification Phosphotyrosine; by ABL, LYN, SRC and JAK2. Y89 bears the Phosphotyrosine mark. The span at 104–113 shows a compositional bias: polar residues; that stretch reads QESQDVSGSR. The Nuclear localization signal signature appears at 153–169; the sequence is KRPAAEDSSSQNKRANR. At T170 the chain carries Phosphothreonine; by CaMK1. The span at 175 to 186 shows a compositional bias: polar residues; sequence SDGSPNAGTVEQ. T187 carries the post-translational modification Phosphothreonine; by PKB/AKT1, CDK1 and CDK2. T197 is subject to Phosphothreonine; by CaMK1, PKB/AKT1, RPS6KA1, RPS6KA3 and PIM1.

This sequence belongs to the CDI family. Forms a ternary complex composed of CCNE1, CDK2 and CDKN1B. Interacts directly with CCNE1; the interaction is inhibited by CDK2-dependent phosphorylation on Thr-187. Interacts with COPS5, subunit of the COP9 signalosome complex; the interaction leads to CDKN1B degradation. Interacts with NUP50; the interaction leads to nuclear import and degradation of phosphorylated CDKN1B. Interacts with CCND1 and SNX6. Interacts (Thr-197-phosphorylated form) with 14-3-3 proteins, binds strongly YWHAQ, weakly YWHAE and YWHAH, but not YWHAB nor YWHAZ; the interaction with YWHAQ results in translocation to the cytoplasm. Interacts with AKT1 and LYN; the interactions lead to cytoplasmic mislocation, phosphorylation of CDKN1B and inhibition of cell cycle arrest. Forms a ternary complex with CCNA2 and CDK2; CDKN1B inhibits the kinase activity of CDK2 through conformational rearrangements. Interacts (unphosphorylated form) with CDK2. Forms a complex with CDK2 and SPDYA, but does not directly interact with SPDYA. Forms a ternary complex composed of cyclin D, CDK4 and CDKN1B. Interacts (phosphorylated on Tyr-88 and Tyr-89) with CDK4; the interaction is required for cyclin D and CDK4 complex assembly, induces nuclear translocation and activates the CDK4 kinase activity. Interacts with GRB2. Interacts with PIM1. Identified in a complex with SKP1, SKP2 and CKS1B. Interacts with UHMK1; the interaction leads to cytoplasmic mislocation, phosphorylation of CDKN1B and inhibition of cell cycle arrest. Also interacts with CDK1. Dephosphorylated on Thr-187 by PPM1H, leading to CDKN1B stability. Phosphorylated; phosphorylation occurs on serine, threonine and tyrosine residues. Phosphorylation on Ser-10 is the major site of phosphorylation in resting cells, takes place at the G(0)-G(1) phase and leads to protein stability. Phosphorylation on other sites is greatly enhanced by mitogens, growth factors, MYC and in certain cancer cell lines. The phosphorylated form found in the cytoplasm is inactivate. Phosphorylation on Thr-197 is required for interaction with 14-3-3 proteins. Phosphorylation on Thr-187, by CDK1 and CDK2 leads to protein ubiquitination and proteasomal degradation. Tyrosine phosphorylation promotes this process. Phosphorylation by PKB/AKT1 can be suppressed by LY294002, an inhibitor of the catalytic subunit of PI3K. Phosphorylation on Tyr-88 and Tyr-89 has no effect on binding CDK2, but is required for binding CDK4. Dephosphorylated on tyrosine residues by G-CSF. Dephosphorylated on Thr-187 by PPM1H, leading to CDKN1B stability. In terms of processing, ubiquitinated; in the cytoplasm by the KPC complex (composed of RNF123/KPC1 and UBAC1/KPC2) and, in the nucleus, by SCF(SKP2). The latter requires prior phosphorylation on Thr-187. Ubiquitinated; by a TRIM21-containing SCF(SKP2)-like complex; leads to its degradation. Post-translationally, subject to degradation in the lysosome. Interaction with SNX6 promotes lysosomal degradation.

It is found in the nucleus. The protein localises to the cytoplasm. It localises to the endosome. Important regulator of cell cycle progression. Inhibits the kinase activity of CDK2 bound to cyclin A, but has little inhibitory activity on CDK2 bound to SPDYA. Involved in G1 arrest. Potent inhibitor of cyclin E- and cyclin A-CDK2 complexes. Forms a complex with cyclin type D-CDK4 complexes and is involved in the assembly, stability, and modulation of CCND1-CDK4 complex activation. Acts either as an inhibitor or an activator of cyclin type D-CDK4 complexes depending on its phosphorylation state and/or stoichometry. The protein is Cyclin-dependent kinase inhibitor 1B (Cdkn1b) of Mus musculus (Mouse).